A 417-amino-acid chain; its full sequence is Probable dihydrofolate synthetase (417 aa).

34-37 (GKGS) provides a ligand contact to ATP. Positions 58, 123, and 151 each coordinate Mg(2+). ATP-binding residues include Arg-274 and Asp-289.

It belongs to the folylpolyglutamate synthase family.

The enzyme catalyses 7,8-dihydropteroate + L-glutamate + ATP = 7,8-dihydrofolate + ADP + phosphate + H(+). It functions in the pathway cofactor biosynthesis; tetrahydrofolylpolyglutamate biosynthesis. Its function is as follows. Glutamate-adding enzyme which catalyzes the binding of the first glutamyl side chain to dihydropteroate. Leads to the de nove synthesis of tetrahydrofolate. de novo. The protein is Probable dihydrofolate synthetase (fol3) of Schizosaccharomyces pombe (strain 972 / ATCC 24843) (Fission yeast).